Reading from the N-terminus, the 21-residue chain is Ocellatin-2 (21 aa).

Residue Ile-21 is modified to Isoleucine amide.

As to expression, expressed by the skin dorsal glands.

The protein localises to the secreted. Has hemolytic activity against human erythrocytes and antibacterial activity against the Gram-negative bacterium E.coli. This is Ocellatin-2 from Leptodactylus ocellatus (Argus frog).